We begin with the raw amino-acid sequence, 267 residues long: Thiamine thiazole synthase (267 aa).

Residues Ser47, 66-67 (ER), Gly74, Val138, and 164-166 (HID) contribute to the NAD(+) site. Residues Asp166 and His181 each coordinate Fe cation. NAD(+)-binding residues include Ser184 and Met230. Arg240 is a binding site for glycine.

It belongs to the THI4 family. As to quaternary structure, homooctamer; tetramer of dimers. Fe(2+) is required as a cofactor.

It carries out the reaction hydrogen sulfide + glycine + NAD(+) = ADP-5-ethyl-4-methylthiazole-2-carboxylate + nicotinamide + 3 H2O + H(+). It participates in cofactor biosynthesis; thiamine diphosphate biosynthesis. In terms of biological role, involved in the biosynthesis of the thiazole moiety of thiamine. Catalyzes the conversion of NAD and glycine to adenosine diphosphate 5-(2-hydroxyethyl)-4-methylthiazole-2-carboxylate (ADT), an adenylated thiazole intermediate, using free sulfide as a source of sulfur. The polypeptide is Thiamine thiazole synthase (Methanocaldococcus jannaschii (strain ATCC 43067 / DSM 2661 / JAL-1 / JCM 10045 / NBRC 100440) (Methanococcus jannaschii)).